A 217-amino-acid chain; its full sequence is 4-hydroxy-tetrahydrodipicolinate reductase (217 aa).

NAD(+)-binding positions include 7–12, 71–73, and 95–98; these read GFKGKM, GTT, and SYNF. The active-site Proton donor/acceptor is the His127. His128 is a (S)-2,3,4,5-tetrahydrodipicolinate binding site. Lys131 (proton donor) is an active-site residue. 137–138 contributes to the (S)-2,3,4,5-tetrahydrodipicolinate binding site; sequence GT.

The protein belongs to the DapB family.

The protein resides in the cytoplasm. It catalyses the reaction (S)-2,3,4,5-tetrahydrodipicolinate + NAD(+) + H2O = (2S,4S)-4-hydroxy-2,3,4,5-tetrahydrodipicolinate + NADH + H(+). The catalysed reaction is (S)-2,3,4,5-tetrahydrodipicolinate + NADP(+) + H2O = (2S,4S)-4-hydroxy-2,3,4,5-tetrahydrodipicolinate + NADPH + H(+). The protein operates within amino-acid biosynthesis; L-lysine biosynthesis via DAP pathway; (S)-tetrahydrodipicolinate from L-aspartate: step 4/4. Its function is as follows. Catalyzes the conversion of 4-hydroxy-tetrahydrodipicolinate (HTPA) to tetrahydrodipicolinate. This is 4-hydroxy-tetrahydrodipicolinate reductase from Thermosipho africanus (strain TCF52B).